Reading from the N-terminus, the 539-residue chain is Chaperone Ric-8A (539 aa).

A disordered region spans residues 506–539; sequence PMGVTSDGRLGPLDEAAQKMLQRQESSDLDSDSD.

This sequence belongs to the synembryn family.

It localises to the cytoplasm. The protein localises to the cell cortex. Functionally, chaperone that specifically binds and folds nascent G alpha proteins prior to G protein heterotrimer formation, promoting their stability and activity: folds GNAI1, GNAO1, GNA13 and GNAQ. Does not fold G(s) G-alpha proteins GNAS nor GNAL. Also acts as a guanine nucleotide exchange factor (GEF) for G alpha proteins by stimulating exchange of bound GDP for free GTP. The chain is Chaperone Ric-8A (ric8a) from Xenopus laevis (African clawed frog).